The sequence spans 345 residues: tRNA-dihydrouridine(20/20a) synthase (345 aa).

FMN-binding positions include 26–28 (PML) and Gln78. The active-site Proton donor is Cys108. Residues Lys147, His180, 220–222 (NGG), and 242–243 (GR) each bind FMN.

Belongs to the Dus family. DusA subfamily. FMN serves as cofactor.

It carries out the reaction 5,6-dihydrouridine(20) in tRNA + NADP(+) = uridine(20) in tRNA + NADPH + H(+). It catalyses the reaction 5,6-dihydrouridine(20) in tRNA + NAD(+) = uridine(20) in tRNA + NADH + H(+). The enzyme catalyses 5,6-dihydrouridine(20a) in tRNA + NADP(+) = uridine(20a) in tRNA + NADPH + H(+). The catalysed reaction is 5,6-dihydrouridine(20a) in tRNA + NAD(+) = uridine(20a) in tRNA + NADH + H(+). Functionally, catalyzes the synthesis of 5,6-dihydrouridine (D), a modified base found in the D-loop of most tRNAs, via the reduction of the C5-C6 double bond in target uridines. Specifically modifies U20 and U20a in tRNAs. This Yersinia pestis protein is tRNA-dihydrouridine(20/20a) synthase.